The chain runs to 569 residues: MLCEIECRALNAAHTMLIQDFEPRDALTYLEGEKIFTEDHSDLISNMPTRLERIANFLRAYRRQASELAPLIDFFEYNNQNHLKDFLDEYLWFATHQPDKLRPVVLVPKFSRQMLDRKLLLGNVPKQMNCFSREFHVDRVIEKLDEMCDLESFFLFLHGRSGSGKSVIASQALSKSDQLIGINYDSVVWLKDSGTTPKATFDLFTDLLLMLKRARVVSDTDDSHNMPDFINRVLSRSEDDLLNFPSVEHVTSVVLKRMIANALIDRPNTLFVLDDVVQEDTIRWAQELRLRCLITTRDVEISNAASPECEFIEVTPLESYECFELLESYGMPVPAIERDEDILHKTIDLTSGNPAALMMIFKSCEPKTFEKMAQLNSKLETRGLSAIECITPYCYKSLSSSLQRCVEVLSDEDRSALAFAVIMPPGIDIPVKIWSCVIPVDICSNEEDQLDDEVADRLKRLSKRGALLSGKRSPVLTYKIDHVIHLFLKHVVDVQTIANGISILEQRLHELGNNNTPTPERHMPSKFRRTSAGDMFPKVEDSVIRPEDYSKFMQIHRTFYDSLKKFTSQ.

In terms of domain architecture, CARD spans 1 to 91; sequence MLCEIECRAL…HLKDFLDEYL (91 aa). Residues 116-442 form the NB-ARC domain; the sequence is DRKLLLGNVP…IWSCVIPVDI (327 aa). Residues Phe131, 162–167, and Gln171 each bind ATP; that span reads GSGKSV. Residue Ser166 coordinates Mg(2+).

As to quaternary structure, associates as an asymmetric homodimer with ced-9. Upon release from ced-9, forms an octamer, known as the apoptosome, and interacts with ced-3; the interaction results in ced-3 autoproteolytic cleavage and activation. The octamer (a tetramer of an asymmetric dimer) also interacts with two processed ced-3 to form a stable holoenzyme. Interacts with sex-determining protein fem-1. May form a complex composed of ced-3, ced-4 and mac-1 or of ced-9, ced-4 and mac-1. Within the complex, interacts with ced-4.

It is found in the mitochondrion. It localises to the cytoplasm. The protein localises to the perinuclear region. Plays a major role in programmed cell death (PCD, apoptosis). egl-1 binds to and directly inhibits the activity of ced-9, releasing the cell death activator ced-4 from a ced-9/ced-4 containing protein complex and allowing ced-4 to induce caspase ced-3 autoproteolytic cleavage and activation. Also forms a holoenzyme with processed ced-3 enhancing ced-3 activity. Component of the egl-1, ced-9, ced-4 and ced-3 apoptotic signaling cascade required for the initiation of programmed cell death in cells fated to die during embryonic and postembryonic development. During oogenesis, required for germline apoptosis downstream of ced-9 and upstream of ced-3 but independently of egl-1. May regulate germline apoptosis in response to DNA damage, probably downstream of let-60/ras and mpk-1 pathway. Regulates CEP neuron apoptosis in response to high Al(3+) levels. During male tail morphogenesis, promotes apoptosis of the tail-spike cell. During larval development, required for the elimination of transient presynaptic components downstream of egl-1 and ced-9 and upstream of ced-3 apoptotic pathway. Together with ain-1, a component of the miRNA-induced-silencing complex (miRISC), and probably upstream of ced-3, regulates temporal cell fate patterning during larval development. May play a role in resistance to S.typhimurium-mediated infection. This chain is Cell death protein 4, found in Caenorhabditis briggsae.